The primary structure comprises 117 residues: Large ribosomal subunit protein bL20 (117 aa).

It belongs to the bacterial ribosomal protein bL20 family.

Binds directly to 23S ribosomal RNA and is necessary for the in vitro assembly process of the 50S ribosomal subunit. It is not involved in the protein synthesizing functions of that subunit. The polypeptide is Large ribosomal subunit protein bL20 (Aliivibrio salmonicida (strain LFI1238) (Vibrio salmonicida (strain LFI1238))).